Consider the following 744-residue polypeptide: Polyribonucleotide nucleotidyltransferase (744 aa).

Mg(2+) contacts are provided by aspartate 487 and aspartate 493. Residues 554–613 (PSTTTLKVDKDKIRDIIGPGGKVIKEICETSGAKIDISDDGTVSIYASDKDKLKVALDKV) enclose the KH domain. The S1 motif domain maps to 623–691 (GEVFNGTVMK…NKGKAKLTIK (69 aa)). Residues 691 to 744 (KNAEKDKSSANPKPKNSPKEHQEPEKRDNGKKRAWNEDNNAETTEVVTERKYFS) form a disordered region. Residues 707 to 718 (SPKEHQEPEKRD) show a composition bias toward basic and acidic residues. Positions 727–736 (EDNNAETTEV) are enriched in polar residues.

This sequence belongs to the polyribonucleotide nucleotidyltransferase family. Mg(2+) serves as cofactor.

It localises to the cytoplasm. The enzyme catalyses RNA(n+1) + phosphate = RNA(n) + a ribonucleoside 5'-diphosphate. Functionally, involved in mRNA degradation. Catalyzes the phosphorolysis of single-stranded polyribonucleotides processively in the 3'- to 5'-direction. This chain is Polyribonucleotide nucleotidyltransferase, found in Rickettsia bellii (strain OSU 85-389).